A 205-amino-acid polypeptide reads, in one-letter code: Small ribosomal subunit protein uS4 (205 aa).

The segment at 18–46 is disordered; the sequence is NIWGRPKSPVNRREYGPGQHGQRRKGKLS. In terms of domain architecture, S4 RNA-binding spans 94–154; it reads RRLDAVVYRA…EASKQLAHVL (61 aa).

This sequence belongs to the universal ribosomal protein uS4 family. As to quaternary structure, part of the 30S ribosomal subunit. Contacts protein S5. The interaction surface between S4 and S5 is involved in control of translational fidelity.

Its function is as follows. One of the primary rRNA binding proteins, it binds directly to 16S rRNA where it nucleates assembly of the body of the 30S subunit. Functionally, with S5 and S12 plays an important role in translational accuracy. In Bradyrhizobium diazoefficiens (strain JCM 10833 / BCRC 13528 / IAM 13628 / NBRC 14792 / USDA 110), this protein is Small ribosomal subunit protein uS4.